Consider the following 876-residue polypeptide: Alanine--tRNA ligase (876 aa).

Zn(2+) contacts are provided by H564, H568, C666, and H670.

It belongs to the class-II aminoacyl-tRNA synthetase family. Homotetramer. Zn(2+) is required as a cofactor.

The protein localises to the cytoplasm. The enzyme catalyses tRNA(Ala) + L-alanine + ATP = L-alanyl-tRNA(Ala) + AMP + diphosphate. Its function is as follows. Catalyzes the attachment of alanine to tRNA(Ala) in a two-step reaction: alanine is first activated by ATP to form Ala-AMP and then transferred to the acceptor end of tRNA(Ala). Also edits incorrectly charged Ser-tRNA(Ala) and Gly-tRNA(Ala) via its editing domain. This chain is Alanine--tRNA ligase, found in Salmonella typhimurium (strain LT2 / SGSC1412 / ATCC 700720).